The sequence spans 321 residues: Serine protease 52 (321 aa).

The signal sequence occupies residues methionine 1–alanine 27. A Peptidase S1 domain is found at isoleucine 56–alanine 287. An intrachain disulfide couples cysteine 81 to cysteine 97. Active-site charge relay system residues include histidine 96 and aspartate 142. N-linked (GlcNAc...) asparagine glycosylation is present at asparagine 153. 3 disulfides stabilise this stretch: cysteine 175–cysteine 242, cysteine 208–cysteine 221, and cysteine 232–cysteine 263. The active-site Charge relay system is the serine 236. The chain crosses the membrane as a helical span at residues alanine 300–leucine 320.

The protein belongs to the peptidase S1 family.

It localises to the membrane. In terms of biological role, probable serine protease. The sequence is that of Serine protease 52 (Prss52) from Mus musculus (Mouse).